Reading from the N-terminus, the 244-residue chain is Small ribosomal subunit protein uS2 (244 aa).

This sequence belongs to the universal ribosomal protein uS2 family.

This Buchnera aphidicola subsp. Acyrthosiphon pisum (strain 5A) protein is Small ribosomal subunit protein uS2.